Consider the following 575-residue polypeptide: MQSPWKILTVAPLFLLLSLQSSASPANDDQSRPSLSNGHTCVGCVLVVSVIEQLAQVHNSTVQASMERLCSYLPEKLFLKTTCYLVIDKFGSDIIKLLSADMNADVVCHTLEFCKQNTGQPLCHLYPLPKETWKFTLQKARQIVKKSPILKYSRSGSDICSLPVLAKICQKIKLAMEQSVPFKDVDSDKYSVFPTLRGYHWRGRDCNDSDESVYPGRRPNNWDVHQDSNCNGIWGVDPKDGVPYEKKFCEGSQPRGIILLGDSAGAHFHISPEWITASQMSLNSFINLPTALTNELDWPQLSGATGFLDSTVGIKEKSIYLRLWKRNHCNHRDYQNISRNGASSRNLKKFIESLSRNKVLDYPAIVIYAMIGNDVCSGKSDPVPAMTTPEKLYSNVMQTLKHLNSHLPNGSHVILYGLPDGTFLWDNLHNRYHPLGQLNKDMTYAQLYSFLNCLQVSPCHGWMSSNKTLRTLTSERAEQLSNTLKKIAASEKFTNFNLFYMDFAFHEIIQEWQKRGGQPWQLIEPVDGFHPNEVALLLLADHFWKKVQLQWPQILGKENPFNPQIKQVFGDQGGH.

The N-terminal stretch at 1-23 (MQSPWKILTVAPLFLLLSLQSSA) is a signal peptide. The propeptide occupies 24–34 (SPANDDQSRPS). Residues 37–118 (NGHTCVGCVL…HTLEFCKQNT (82 aa)) form the Saposin B-type domain. An important for enzyme activity, localization to cytoplasmic vesicles, and protein stability region spans residues 38–70 (GHTCVGCVLVVSVIEQLAQVHNSTVQASMERLC). 8 disulfides stabilise this stretch: cysteine 41–cysteine 114, cysteine 44–cysteine 108, cysteine 70–cysteine 83, cysteine 123–cysteine 453, cysteine 160–cysteine 169, cysteine 206–cysteine 230, cysteine 249–cysteine 329, and cysteine 376–cysteine 459. An N-linked (GlcNAc...) asparagine glycan is attached at asparagine 59. The interval 173 to 177 (KLAME) is lipopolysaccharide binding. Ca(2+) is bound by residues aspartate 184, aspartate 186, aspartate 188, tyrosine 190, aspartate 205, asparagine 207, aspartate 208, aspartate 210, valine 213, aspartate 223, aspartate 227, asparagine 229, asparagine 231, isoleucine 233, and glutamate 245. An N-linked (GlcNAc...) asparagine glycan is attached at asparagine 207. Serine 263 is an active-site residue. N-linked (GlcNAc...) asparagine glycosylation is found at asparagine 409 and asparagine 466.

Heterodimer of the large and small subunits; disulfide-linked. The cofactor is Ca(2+). In terms of processing, cleaved into a large and a small subunit. Post-translationally, the small subunit is N-glycosylated.

The protein localises to the secreted. Its subcellular location is the cytoplasmic vesicle. The catalysed reaction is a 3-(acyloxy)acyl derivative of bacterial toxin + H2O = a 3-hydroxyacyl derivative of bacterial toxin + a fatty acid + H(+). With respect to regulation, inhibited by EDTA. Its function is as follows. Removes the secondary (acyloxyacyl-linked) fatty acyl chains from the lipid A region of bacterial lipopolysaccharides. By breaking down LPS, terminates the host response to bacterial infection and prevents prolonged and damaging inflammatory responses. In peritoneal macrophages, seems to be important for recovery from a state of immune tolerance following infection by Gram-negative bacteria. The protein is Acyloxyacyl hydrolase of Homo sapiens (Human).